Reading from the N-terminus, the 63-residue chain is Large ribosomal subunit protein uL29 (63 aa).

The protein belongs to the universal ribosomal protein uL29 family.

The polypeptide is Large ribosomal subunit protein uL29 (Pelagibacter ubique (strain HTCC1062)).